We begin with the raw amino-acid sequence, 402 residues long: Methylthioribose-1-phosphate isomerase (402 aa).

Catalysis depends on Asp-275, which acts as the Proton donor.

The protein belongs to the eIF-2B alpha/beta/delta subunits family. MtnA subfamily.

The protein localises to the cytoplasm. The protein resides in the nucleus. It carries out the reaction 5-(methylsulfanyl)-alpha-D-ribose 1-phosphate = 5-(methylsulfanyl)-D-ribulose 1-phosphate. It functions in the pathway amino-acid biosynthesis; L-methionine biosynthesis via salvage pathway; L-methionine from S-methyl-5-thio-alpha-D-ribose 1-phosphate: step 1/6. Its function is as follows. Catalyzes the interconversion of methylthioribose-1-phosphate (MTR-1-P) into methylthioribulose-1-phosphate (MTRu-1-P). This is Methylthioribose-1-phosphate isomerase from Clavispora lusitaniae (strain ATCC 42720) (Yeast).